We begin with the raw amino-acid sequence, 370 residues long: MAAPGRKINFAAGPAKLPEEVLLKMQEEQLNFNNLGVSVIEMSHRSKEFGALLNETISLIRELMNVPDNFEILFMQGGGTGQFAAIPLNLKGDHEHADYIVTGAWSSKAADEAGKYINVKKVFQPSKPYVTVPDQENWVHDEKAAYLYYCANETVHGIEFTPTAPESHNVPLVADVSSNFMARPFDFKDHGVVFGGAQKNLGAAGLTIVIVRKDLIGKQQAITPSVFSYKEMIANNSLYNTPPTGGIYTTNLVLKWIKSKGGLQAIYELNLQKSGMIYDIIDNSNGFYHCAVDKRYRSIMNVCFRIGGPSGNDELEEKFLKGSIERNMISLKGHRSVGGIRASLYNAISVEETQVLATWMNEFQKLHNTN.

Arg45 lines the L-glutamate pocket. Pyridoxal 5'-phosphate-binding positions include 79-80 (GT), Trp105, Thr154, Asp175, and Gln198. Residue Lys199 is modified to N6-(pyridoxal phosphate)lysine. 240 to 241 (NT) contacts pyridoxal 5'-phosphate.

This sequence belongs to the class-V pyridoxal-phosphate-dependent aminotransferase family. SerC subfamily. Homodimer. Pyridoxal 5'-phosphate is required as a cofactor.

The catalysed reaction is O-phospho-L-serine + 2-oxoglutarate = 3-phosphooxypyruvate + L-glutamate. It catalyses the reaction 4-(phosphooxy)-L-threonine + 2-oxoglutarate = (R)-3-hydroxy-2-oxo-4-phosphooxybutanoate + L-glutamate. The protein operates within amino-acid biosynthesis; L-serine biosynthesis; L-serine from 3-phospho-D-glycerate: step 2/3. Its pathway is cofactor biosynthesis; pyridoxine 5'-phosphate biosynthesis; pyridoxine 5'-phosphate from D-erythrose 4-phosphate: step 3/5. In terms of biological role, catalyzes the reversible conversion of 3-phosphohydroxypyruvate to phosphoserine and of 3-hydroxy-2-oxo-4-phosphonooxybutanoate to phosphohydroxythreonine. In Caenorhabditis elegans, this protein is Probable phosphoserine aminotransferase.